Reading from the N-terminus, the 470-residue chain is Glutamate--tRNA ligase (470 aa).

Positions 9–19 (PSPTGFLHVGG) match the 'HIGH' region motif. A 'KMSKS' region motif is present at residues 236-240 (RLSKR). Residue K239 coordinates ATP.

It belongs to the class-I aminoacyl-tRNA synthetase family. Glutamate--tRNA ligase type 1 subfamily. Monomer.

The protein localises to the cytoplasm. It carries out the reaction tRNA(Glu) + L-glutamate + ATP = L-glutamyl-tRNA(Glu) + AMP + diphosphate. Catalyzes the attachment of glutamate to tRNA(Glu) in a two-step reaction: glutamate is first activated by ATP to form Glu-AMP and then transferred to the acceptor end of tRNA(Glu). The protein is Glutamate--tRNA ligase of Legionella pneumophila (strain Lens).